The chain runs to 200 residues: RNA-binding protein with multiple splicing 2 (200 aa).

Residues 22 to 99 enclose the RRM domain; it reads RTLFVSGLPV…QTLRLEFAKA (78 aa). The interval 32–42 is important for homodimerization; the sequence is DIKPRELYLLF.

Homodimer. As to expression, expressed in developing heart.

The protein resides in the cytoplasm. Its subcellular location is the nucleus. It is found in the stress granule. Functionally, RNA-binding protein involved in the regulation of smooth muscle cell differentiation and proliferation in the gastrointestinal system. Binds NOG mRNA, the major inhibitor of the bone morphogenetic protein (BMP) pathway. Mediates an increase of NOG mRNA levels, thereby contributing to the negative regulation of BMP signaling pathway and promoting reversible dedifferentiation and proliferation of smooth muscle cells. Acts as a pre-mRNA alternative splicing regulator. Mediates ACTN1 and FLNB alternative splicing. Likely binds to mRNA tandem CAC trinucleotide or CA dinucleotide motifs. This Gallus gallus (Chicken) protein is RNA-binding protein with multiple splicing 2.